We begin with the raw amino-acid sequence, 190 residues long: MLLFTLCFFADLENGGKALASPPGKWQKADVRFDSSTAFKSLVVSPDKKTVENVGVPQVVPDNPERFSSSPCVLGSPGFRSGRHFFEVRYGTQREWAVGLAGKSVKRKGYLRLVPEELIWQRGLWFLQRLETDSDKLQKGSGKIVVFLDYSEGKVIFDQDGEVTTVQANFNGEEVVPFYYLGGGVSLTNL.

The signal sequence occupies residues Met1–Ala20. The B30.2/SPRY domain maps to Ser21 to Leu127. Positions Gln128–Leu190 are excised as a propeptide.

It belongs to the ohanin/vespryn family. In terms of tissue distribution, expressed by the venom gland.

The protein localises to the secreted. Its function is as follows. Neurotoxin that produces dose-dependent hypolocomotion and hyperalgesia in mice. May directly act on the central nervous system, as it is 6500-fold more potent when administered intracerebroventricularly than intraperitoneal. The polypeptide is Vespryn-21 (Drysdalia coronoides (White-lipped snake)).